Here is a 231-residue protein sequence, read N- to C-terminus: Ferritin light chain (231 aa).

A signal peptide spans 1-19 (MKMLILAVSCLLAITGSLA). C23 and C43 are disulfide-bonded. The Ferritin-like diiron domain occupies 50 to 208 (YGSHGNVATE…GHTSDLKKFI (159 aa)). N134 is a glycosylation site (N-linked (GlcNAc...) asparagine).

This sequence belongs to the ferritin family. Oligomer of 12 light (L) chains and 12 heavy (H) chains; L and H chains are disulfide-linked. The functional molecule forms a roughly spherical shell with a diameter of 12 nm and contains a central cavity into which the insoluble ferric iron core is deposited.

Its subcellular location is the golgi apparatus. The protein resides in the secreted. Its function is as follows. Stores iron in a soluble, non-toxic, readily available form. Important for iron homeostasis. Iron is taken up in the ferrous form and deposited as ferric hydroxides after oxidation. Ferritin is composed of a heavy (H) chain which is responsible for the oxidation and uptake of ferrous iron, and a light (L) chain which facilitates the nucleation of the ferrihydrite iron core. In Trichoplusia ni (Cabbage looper), this protein is Ferritin light chain.